We begin with the raw amino-acid sequence, 122 residues long: Large ribosomal subunit protein bL19 (122 aa).

This sequence belongs to the bacterial ribosomal protein bL19 family.

Its function is as follows. This protein is located at the 30S-50S ribosomal subunit interface and may play a role in the structure and function of the aminoacyl-tRNA binding site. The sequence is that of Large ribosomal subunit protein bL19 from Prosthecochloris aestuarii (strain DSM 271 / SK 413).